Reading from the N-terminus, the 352-residue chain is C-C chemokine receptor type 5 (352 aa).

The Extracellular portion of the chain corresponds to 1-30; it reads MDYQVSSPTYDIDYYTSEPCQKINVKQIAA. Y3 bears the Sulfotyrosine mark. S6 and S7 each carry an O-linked (GalNAc...) serine glycan. Sulfotyrosine occurs at positions 10, 14, and 15. Disulfide bonds link C20–C269 and C101–C178. Residues 31–58 traverse the membrane as a helical segment; it reads RLLPPLYSLVFIFGFVGNILVVLILINC. Over 59–68 the chain is Cytoplasmic; the sequence is KRLKSMTDIY. The chain crosses the membrane as a helical span at residues 69–89; it reads LLNLAISDLLFLLTVPFWAHY. The Extracellular segment spans residues 90 to 102; sequence AAAQWDFGNTMCQ. A helical membrane pass occupies residues 103 to 124; sequence LLTGLYFIGFFSGIFFIILLTI. The Cytoplasmic segment spans residues 125 to 141; that stretch reads DRYLAIVHAVFALKART. A helical membrane pass occupies residues 142–166; it reads VTFGVVTSVITWVVAVFASLPGIIF. The Extracellular segment spans residues 167 to 198; sequence TRSQREGLHYTCSSHFPYSQYQFWKNFQTLKI. Residues 199 to 218 traverse the membrane as a helical segment; it reads VILGLVLPLLVMVICYSGIL. Over 219-235 the chain is Cytoplasmic; the sequence is KTLLRCRNEKKRHRAVR. A helical membrane pass occupies residues 236 to 260; sequence LIFTIMIVYFLFWAPYNIVLLLNTF. Over 261–277 the chain is Extracellular; that stretch reads QEFFGLNNCSSSNRLDQ. A helical membrane pass occupies residues 278-301; that stretch reads AMQVTETLGMTHCCINPIIYAFVG. At 302–352 the chain is on the cytoplasmic side; the sequence is EKFRNYLLVFFQKHIAKRFCKCCSIFQQEASERASSVYTRSTGEQEISVGL. Residues C321, C323, and C324 are each lipidated (S-palmitoyl cysteine). S336, S337, S342, and S349 each carry phosphoserine; by BARK1.

It belongs to the G-protein coupled receptor 1 family. Interacts with PRAF2. Efficient ligand binding to CCL3/MIP-1alpha and CCL4/MIP-1beta requires sulfation, O-glycosylation and sialic acid modifications. Glycosylation on Ser-6 is required for efficient binding of CCL4. Interacts with GRK2. Interacts with ARRB1 and ARRB2. Interacts with CNIH4. Interacts with S100A4; this interaction stimulates T-lymphocyte chemotaxis. In terms of processing, sulfated on at least 2 of the N-terminal tyrosines. Sulfation is required for efficient binding of the chemokines, CCL3 and CCL4. Palmitoylation in the C-terminal is important for cell surface expression. Post-translationally, phosphorylation on serine residues in the C-terminal is stimulated by binding CC chemokines especially by APO-RANTES. In terms of processing, O-glycosylated, but not N-glycosylated. Ser-6 appears to be the major site even if Ser-7 may be also O-glycosylated. Also sialylated glycans present which contribute to chemokine binding. Thr-16 and Ser-17 may also be glycosylated and, if so, with small moieties such as a T-antigen.

It is found in the cell membrane. Functionally, receptor for a number of inflammatory CC-chemokines including CCL3/MIP-1-alpha, CCL4/MIP-1-beta and RANTES and subsequently transduces a signal by increasing the intracellular calcium ion level. May play a role in the control of granulocytic lineage proliferation or differentiation. Participates in T-lymphocyte migration to the infection site by acting as a chemotactic receptor. This chain is C-C chemokine receptor type 5 (CCR5), found in Cercocebus galeritus (Tana river mangabey).